Reading from the N-terminus, the 316-residue chain is Acetaldehyde dehydrogenase (316 aa).

11-14 (SGNI) provides a ligand contact to NAD(+). Cys-131 functions as the Acyl-thioester intermediate in the catalytic mechanism. Residues 162–170 (SAGPGTRAN) and Asn-289 each bind NAD(+).

This sequence belongs to the acetaldehyde dehydrogenase family. In terms of assembly, interacts with MhpE.

The catalysed reaction is acetaldehyde + NAD(+) + CoA = acetyl-CoA + NADH + H(+). The protein operates within aromatic compound metabolism; 3-phenylpropanoate degradation. Its function is as follows. Catalyzes the conversion of acetaldehyde to acetyl-CoA, using NAD(+) and coenzyme A. Is the final enzyme in the meta-cleavage pathway for the degradation of aromatic compounds. This Escherichia coli O7:K1 (strain IAI39 / ExPEC) protein is Acetaldehyde dehydrogenase.